The primary structure comprises 252 residues: uncharacterized protein (252 aa).

The protein localises to the plastid. The protein resides in the chloroplast. This is an uncharacterized protein from Guillardia theta (Cryptophyte).